A 1562-amino-acid chain; its full sequence is Cell wall protein RBR3 (1562 aa).

Residues 1 to 20 form the signal peptide; sequence MIIFRKSFFTFWLLLNSVLA. Asparagine 190 carries N-linked (GlcNAc...) asparagine glycosylation. Over residues 338–353 the composition is skewed to low complexity; it reads APGTNPTEYTTTITTT. The interval 338-366 is disordered; it reads APGTNPTEYTTTITTTNSAGKPLTETGVV. A glycan (N-linked (GlcNAc...) asparagine) is linked at asparagine 373. 2 stretches are compositionally biased toward low complexity: residues 383-415 and 422-729; these read FPTS…SQPS and SSSK…ISAT. Disordered regions lie at residues 383-729, 1404-1424, and 1455-1486; these read FPTS…ISAT, GSGS…SSSN, and YSSG…GNSN. Asparagine 602, asparagine 679, and asparagine 705 each carry an N-linked (GlcNAc...) asparagine glycan. Residues 1407 to 1419 are compositionally biased toward gly residues; the sequence is SDSGSGSGSGSGS. Positions 1468–1486 are enriched in polar residues; it reads GANNVGSNQTPTVSGGNSN. Asparagine 1538 is lipidated: GPI-anchor amidated asparagine. A propeptide spans 1539–1562 (removed in mature form); that stretch reads SGSKFSVGKSAFIAIILTTFIGFI.

It belongs to the HYR1/IFF family. The GPI-anchor is attached to the protein in the endoplasmic reticulum and serves to target the protein to the cell surface. There, the glucosamine-inositol phospholipid moiety is cleaved off and the GPI-modified mannoprotein is covalently attached via its lipidless GPI glycan remnant to the 1,6-beta-glucan of the outer cell wall layer.

The protein localises to the secreted. The protein resides in the cell wall. It is found in the membrane. Its function is as follows. GPI-anchored cell wall protein involved in cell wall organization, hyphal growth, as well as in host-fungal interaction and virulence. The protein is Cell wall protein RBR3 (RBR3) of Candida albicans (strain SC5314 / ATCC MYA-2876) (Yeast).